Here is a 212-residue protein sequence, read N- to C-terminus: WAP four-disulfide core domain protein 1 (212 aa).

An N-terminal signal peptide occupies residues 1–26 (MGSCDRKALWALSFLLLLLGSSSVQG). A disordered region spans residues 43-62 (EEVAATGSRQPHADRCPPPP). One can recognise a WAP domain in the interval 51–100 (RQPHADRCPPPPRTLPPGACQATRCQSDSECPRHRRCCYNGCAYACLEAV). Cystine bridges form between C58–C88, C70–C92, C75–C87, and C81–C96. The disordered stretch occupies residues 191–212 (EYPEGDSKYVAEPGKGQQRHFP).

As to expression, vascular smooth muscle and prostate. Periacinar ring.

The protein resides in the secreted. Its function is as follows. Has growth inhibitory activity. The sequence is that of WAP four-disulfide core domain protein 1 (Wfdc1) from Rattus norvegicus (Rat).